Reading from the N-terminus, the 154-residue chain is Probable chemoreceptor glutamine deamidase CheD (154 aa).

Belongs to the CheD family.

It catalyses the reaction L-glutaminyl-[protein] + H2O = L-glutamyl-[protein] + NH4(+). Its function is as follows. Probably deamidates glutamine residues to glutamate on methyl-accepting chemotaxis receptors (MCPs), playing an important role in chemotaxis. This chain is Probable chemoreceptor glutamine deamidase CheD, found in Methanococcus maripaludis (strain DSM 14266 / JCM 13030 / NBRC 101832 / S2 / LL).